The chain runs to 446 residues: Minor teichoic acid biosynthesis protein GgaA (446 aa).

The protein belongs to the glycosyltransferase 2 family.

It participates in cell wall biogenesis; poly(glucopyranosyl N-acetylgalactosamine 1-phosphate) teichoic acid biosynthesis. Functionally, involved in the biosynthesis of galactosamine-containing minor teichoic acid, a non-essential cell wall polymer in B.subtilis 168. This Bacillus subtilis (strain 168) protein is Minor teichoic acid biosynthesis protein GgaA (ggaA).